A 275-amino-acid polypeptide reads, in one-letter code: Shikimate dehydrogenase (NADP(+)) (275 aa).

Shikimate is bound by residues 15–17 (SKS) and threonine 62. Lysine 66 serves as the catalytic Proton acceptor. Glutamate 78 serves as a coordination point for NADP(+). The shikimate site is built by asparagine 87 and aspartate 102. NADP(+)-binding positions include 127–131 (GAGGA), 151–156 (NRTPQK), and methionine 215. Tyrosine 217 provides a ligand contact to shikimate. Residue glycine 239 coordinates NADP(+).

This sequence belongs to the shikimate dehydrogenase family. In terms of assembly, homodimer.

It catalyses the reaction shikimate + NADP(+) = 3-dehydroshikimate + NADPH + H(+). Its pathway is metabolic intermediate biosynthesis; chorismate biosynthesis; chorismate from D-erythrose 4-phosphate and phosphoenolpyruvate: step 4/7. Involved in the biosynthesis of the chorismate, which leads to the biosynthesis of aromatic amino acids. Catalyzes the reversible NADPH linked reduction of 3-dehydroshikimate (DHSA) to yield shikimate (SA). This chain is Shikimate dehydrogenase (NADP(+)), found in Nitrosospira multiformis (strain ATCC 25196 / NCIMB 11849 / C 71).